The sequence spans 293 residues: Protease HtpX (293 aa).

Helical transmembrane passes span 4 to 24 and 34 to 54; these read IALF…VLSL and GLLI…LLMS. His-139 provides a ligand contact to Zn(2+). Residue Glu-140 is part of the active site. His-143 lines the Zn(2+) pocket. The next 2 helical transmembrane spans lie at 158 to 178 and 193 to 213; these read VVNT…AGFM and LIYF…ASII. Glu-222 serves as a coordination point for Zn(2+).

This sequence belongs to the peptidase M48B family. Zn(2+) serves as cofactor.

It is found in the cell inner membrane. The polypeptide is Protease HtpX (Enterobacter sp. (strain 638)).